Reading from the N-terminus, the 395-residue chain is MGIKQLYQVISENAPDAIKAGDIKNHFGRKVAIDASMSIYSFLIAVRSEGQQLMSDTGETTSHLMGMFYRTLRMVDNGIKPLYVFDGAPPKLKSGELAKRFARKSEATEAHEEAKETGTAEDVEKFSRRTVRVTREHNAECKKLLKLMGIPYIDAPTEAEAQCAVLARAGKVYAAASEDMDTLCFETPILLRHLTFSEQRKEPIQEIHLNRALEGLGMDRKQFIDLCILLGCDYLEPIPKVGPNTALKLIRDHGSLEKVLEFMENDPKKKFVVPEDWPYEDARELFLNPDVRDANDPECDFKWEAPDVPGLVDFLVKDKGFNEDRVKNGAARLQKNLKSAQQSRLEGFFKPVARTDEEKASLKRKHDEKIQEQKKKKKEEAKAKKEAKSRPRGAG.

Residues 1–104 (MGIKQLYQVI…GELAKRFARK (104 aa)) are N-domain. Aspartate 34 is a binding site for Mg(2+). DNA contacts are provided by arginine 47 and arginine 70. Positions 86, 158, 160, 179, and 181 each coordinate Mg(2+). Positions 122–253 (DVEKFSRRTV…NTALKLIRDH (132 aa)) are I-domain. Glutamate 158 is a binding site for DNA. DNA is bound by residues glycine 231 and aspartate 233. Aspartate 233 lines the Mg(2+) pocket. The interval 341 to 349 (QQSRLEGFF) is interaction with PCNA. The interval 344–395 (RLEGFFKPVARTDEEKASLKRKHDEKIQEQKKKKKEEAKAKKEAKSRPRGAG) is disordered. Basic and acidic residues predominate over residues 353-389 (ARTDEEKASLKRKHDEKIQEQKKKKKEEAKAKKEAKS).

Belongs to the XPG/RAD2 endonuclease family. FEN1 subfamily. In terms of assembly, interacts with PCNA. Three molecules of fen1 bind to one PCNA trimer with each molecule binding to one PCNA monomer. PCNA stimulates the nuclease activity without altering cleavage specificity. Mg(2+) is required as a cofactor. In terms of processing, phosphorylated. Phosphorylation upon DNA damage induces relocalization to the nuclear plasma.

It localises to the nucleus. It is found in the nucleolus. The protein resides in the nucleoplasm. Its subcellular location is the mitochondrion. Structure-specific nuclease with 5'-flap endonuclease and 5'-3' exonuclease activities involved in DNA replication and repair. During DNA replication, cleaves the 5'-overhanging flap structure that is generated by displacement synthesis when DNA polymerase encounters the 5'-end of a downstream Okazaki fragment. It enters the flap from the 5'-end and then tracks to cleave the flap base, leaving a nick for ligation. Also involved in the long patch base excision repair (LP-BER) pathway, by cleaving within the apurinic/apyrimidinic (AP) site-terminated flap. Acts as a genome stabilization factor that prevents flaps from equilibrating into structures that lead to duplications and deletions. Also possesses 5'-3' exonuclease activity on nicked or gapped double-stranded DNA, and exhibits RNase H activity. Also involved in replication and repair of rDNA and in repairing mitochondrial DNA. This is Flap endonuclease 1 (fen1) from Aspergillus niger (strain ATCC MYA-4892 / CBS 513.88 / FGSC A1513).